A 33-amino-acid chain; its full sequence is Cytochrome b6-f complex subunit 8 (33 aa).

A helical transmembrane segment spans residues 2–22 (LFTIAWASLAAVFSFSIAMVV).

This sequence belongs to the PetN family. In terms of assembly, the 4 large subunits of the cytochrome b6-f complex are cytochrome b6, subunit IV (17 kDa polypeptide, PetD), cytochrome f and the Rieske protein, while the 4 small subunits are PetG, PetL, PetM and PetN. The complex functions as a dimer.

The protein localises to the cellular thylakoid membrane. In terms of biological role, component of the cytochrome b6-f complex, which mediates electron transfer between photosystem II (PSII) and photosystem I (PSI), cyclic electron flow around PSI, and state transitions. This Synechococcus sp. (strain CC9311) protein is Cytochrome b6-f complex subunit 8.